A 247-amino-acid chain; its full sequence is Protein FAM133B (247 aa).

2 disordered regions span residues 19 to 38 and 70 to 247; these read SRGP…NRPR and KKEL…PDSP. Basic and acidic residues predominate over residues 70-80; the sequence is KKELEKHREKL. Phosphoserine is present on Ser82. Positions 89 to 102 are enriched in basic residues; it reads KKRQRKKKEKKKSG. Residues 103–119 show a composition bias toward low complexity; sequence RYSSSSSSSSDSSSSSS. Positions 128–140 are enriched in basic residues; the sequence is QGKRRKKKKNRSH. A compositionally biased stretch (basic and acidic residues) spans 165-176; the sequence is KDGTEKEKDIKG. A phosphoserine mark is found at Ser191, Ser192, Ser194, and Ser196. Positions 211–221 are enriched in basic and acidic residues; it reads SSEEREKATEK. A compositionally biased stretch (basic residues) spans 222-239; sequence TKKKKKHKKHSKKKKKKA.

This sequence belongs to the FAM133 family.

This chain is Protein FAM133B (FAM133B), found in Homo sapiens (Human).